A 369-amino-acid polypeptide reads, in one-letter code: Protein pxr-1 (369 aa).

A disordered region spans residues 1–23 (MGLAAAKNKRKLGTDPNNTKWSR). The G-patch domain occupies 25 to 79 (ETTFGQKILRAQGWQPGEFLGAKDAAHAVHHTEASSSHIKVTLKDDNLGLGAKRN). Positions 147-338 (EEDGVPQSDT…GTSTPTVTSS (192 aa)) are disordered. Polar residues predominate over residues 153–167 (QSDTVDQQVETVPSQ). Over residues 218 to 227 (SKKKEKKDKK) the composition is skewed to basic residues. Over residues 228-237 (EKKDQKEKKD) the composition is skewed to basic and acidic residues. Residues 267-292 (KSKKDKKKEKKEKKDKKKDKKEKKRK) show a composition bias toward basic residues. Basic and acidic residues predominate over residues 304-318 (EDSKSKAQKRTKDGA). A compositionally biased stretch (low complexity) spans 322-338 (TSTPGGSGTSTPTVTSS).

The protein belongs to the PINX1 family.

The protein resides in the nucleus. It is found in the nucleolus. Its function is as follows. Involved in rRNA-processing at A0, A1 and A2 sites and negatively regulates telomerase. This chain is Protein pxr-1 (pxr-1), found in Neurospora crassa (strain ATCC 24698 / 74-OR23-1A / CBS 708.71 / DSM 1257 / FGSC 987).